The following is a 243-amino-acid chain: 1-(5-phosphoribosyl)-5-[(5-phosphoribosylamino)methylideneamino] imidazole-4-carboxamide isomerase (243 aa).

The active-site Proton acceptor is Asp8. The Proton donor role is filled by Asp129.

The protein belongs to the HisA/HisF family.

Its subcellular location is the cytoplasm. The catalysed reaction is 1-(5-phospho-beta-D-ribosyl)-5-[(5-phospho-beta-D-ribosylamino)methylideneamino]imidazole-4-carboxamide = 5-[(5-phospho-1-deoxy-D-ribulos-1-ylimino)methylamino]-1-(5-phospho-beta-D-ribosyl)imidazole-4-carboxamide. It functions in the pathway amino-acid biosynthesis; L-histidine biosynthesis; L-histidine from 5-phospho-alpha-D-ribose 1-diphosphate: step 4/9. The sequence is that of 1-(5-phosphoribosyl)-5-[(5-phosphoribosylamino)methylideneamino] imidazole-4-carboxamide isomerase from Geobacter sp. (strain M21).